The chain runs to 255 residues: TIR domain-containing protein (255 aa).

The region spanning 9–185 (LSDQVFINFR…DIVKEVKKQL (177 aa)) is the TIR domain. Residue Glu83 is part of the active site. A run of 2 helical transmembrane segments spans residues 195–215 (AIGV…FIAP) and 223–243 (FFQT…SWFW). A KASH domain is found at 201 to 255 (LAITINLIFSFFIAPKYLPDQKFFQTPEWFIGTLAVVLASWFWYKNNQNKAPPPS).

Forms homomers. Interacts with SUN1, SUN2, SUN3, SUN4 and SUN5.

It localises to the nucleus membrane. It catalyses the reaction NAD(+) + H2O = ADP-D-ribose + nicotinamide + H(+). Its function is as follows. Could play a role in nuclear morphology, specifically nuclear size. The sequence is that of TIR domain-containing protein from Arabidopsis thaliana (Mouse-ear cress).